A 228-amino-acid chain; its full sequence is Sensory transduction protein RegX3 (228 aa).

The region spanning 3–116 is the Response regulatory domain; the sequence is SVLIVEDEES…ELIARIRAVL (114 aa). Residue aspartate 52 is modified to 4-aspartylphosphate. Residues 129–228 constitute a DNA-binding region (ompR/PhoB-type); sequence DGVLEAGPVR…VRGLGYKLEG (100 aa).

In terms of processing, phosphorylated by SenX3.

Member of the two-component regulatory system SenX3/RegX3 involved in stress response. The system is involved in phosphate starvation response. Once phosphorylated by SenX3, activates the expression of the alkaline phosphatase phoA, the high-affinity phosphate transporter pstSCAB, phnDCE, phnF and senX3. May act as a negative regulator of NhaA. Acts by binding to a DNA motif consisting of an inverted repeat. The chain is Sensory transduction protein RegX3 from Mycolicibacterium smegmatis (strain ATCC 700084 / mc(2)155) (Mycobacterium smegmatis).